The sequence spans 383 residues: ADPPGGDISTRSPPRGLAPANVDFAFSLYRQLVSSAPDRNICISPVSVSMALAMLSLGASGHTRTQLLQGLGFNLTEMPEAEIHQGFQYLHHLLGESDTSLEMTMGNALFLDHSLELLESFSADIRRYYESEALATDFQDWPRACRQINEYIENKTQGKIADLFLGLENPAILILVNYIFFKGTWAHPFDPQSTEEKSFYVDDTTTVMVPMMFQSSTVKYLHDPVLPCRLVQLDYVGNGTAFFILPDKGKVDTVIAALSRDTIQRWSKSLTYRLVHLYIPKASISGAYELRGALAAMGIADLFTNQANFSSISQEGPLKVSKVLHKAVLQLDEHGGVEVAATGGPLQLVSEPLTLNFNRPFLILIFDDFTWSSLFLGKVVIPA.

Residues asparagine 74 and asparagine 154 are each glycosylated (N-linked (GlcNAc...) asparagine). Glutamine 232 provides a ligand contact to cortisol. Asparagine 238 carries an N-linked (GlcNAc...) asparagine glycan. Cortisol is bound at residue glutamine 264. Asparagine 308 is a glycosylation site (N-linked (GlcNAc...) asparagine). Tryptophan 371 is a cortisol binding site.

Belongs to the serpin family. As to expression, produced and secreted by hepatocytes, but has also been identified in a number of glycocorticoid responsive cells (it is found in maternal lung, spleen, and ovary and fetal kidney).

The protein localises to the secreted. Functionally, major transport protein for glucocorticoids and progestins in the blood of almost all vertebrate species. The sequence is that of Corticosteroid-binding globulin (SERPINA6) from Oryctolagus cuniculus (Rabbit).